The sequence spans 394 residues: Elongation factor Tu 1 (394 aa).

The tr-type G domain maps to 10–204 (KPHVNVGTIG…ALDSYIPEPE (195 aa)). The G1 stretch occupies residues 19-26 (GHVDHGKT). Position 19–26 (19–26 (GHVDHGKT)) interacts with GTP. Threonine 26 contributes to the Mg(2+) binding site. Positions 60–64 (GITIS) are G2. The segment at 81 to 84 (DCPG) is G3. GTP is bound by residues 81–85 (DCPGH) and 136–139 (NKCD). Positions 136-139 (NKCD) are G4. Positions 174-176 (SAL) are G5.

Belongs to the TRAFAC class translation factor GTPase superfamily. Classic translation factor GTPase family. EF-Tu/EF-1A subfamily. As to quaternary structure, monomer.

The protein localises to the cytoplasm. It carries out the reaction GTP + H2O = GDP + phosphate + H(+). In terms of biological role, GTP hydrolase that promotes the GTP-dependent binding of aminoacyl-tRNA to the A-site of ribosomes during protein biosynthesis. This is Elongation factor Tu 1 from Photorhabdus laumondii subsp. laumondii (strain DSM 15139 / CIP 105565 / TT01) (Photorhabdus luminescens subsp. laumondii).